A 415-amino-acid polypeptide reads, in one-letter code: Mechanosensing system component YbdG (415 aa).

Residues 1 to 24 lie on the Periplasmic side of the membrane; sequence MQDLISQVEDLAGIEIDHTTSMVM. Residues 25-45 form a helical membrane-spanning segment; it reads IFGIIFLTAVVVHIILHWVVL. The Cytoplasmic segment spans residues 46–67; sequence RTFEKRAIASSRLWLQIITQNK. Residues 68-88 traverse the membrane as a helical segment; that stretch reads LFHRLAFTLQGIIVNIQAVFW. Residues 89–104 lie on the Periplasmic side of the membrane; the sequence is LQKGTEAADILTTCAQ. A helical transmembrane segment spans residues 105–125; the sequence is LWIMMYALLSVFSLLDVILNL. Residues 126 to 148 lie on the Cytoplasmic side of the membrane; sequence AQKFPAASQLPLKGIFQGIKLIG. The chain crosses the membrane as a helical span at residues 149–169; sequence AILVGILMISLLIGQSPAILI. The Periplasmic portion of the chain corresponds to 170–173; it reads SGLG. Residues 174–194 form a helical membrane-spanning segment; it reads AMAAVLMLVFKDPILGLVAGI. Over 195–415 the chain is Cytoplasmic; the sequence is QLSANDMLKL…IRSLAGAFKQ (221 aa).

The protein belongs to the MscS (TC 1.A.23) family. Homoheptamer.

Its subcellular location is the cell inner membrane. Functions as a component of a mechanosensing system that transmits signals triggered by external osmotic changes to intracellular factors. The protein is Mechanosensing system component YbdG (ybdG) of Shigella flexneri.